Here is a 353-residue protein sequence, read N- to C-terminus: Polycomb group RING finger protein 6 (353 aa).

Residues 1–116 (MDEAETDATE…FSLRLESGRA (116 aa)) are disordered. The segment covering 9 to 19 (TENKRASEAKR) has biased composition (basic and acidic residues). Positions 23 to 39 (MPPPPPPPPPISPPALI) are enriched in pro residues. The residue at position 34 (S34) is a Phosphoserine. Low complexity predominate over residues 40–52 (PAPAAGEEGPASL). Positions 69–82 (EPERSLGRLRGRFE) are enriched in basic and acidic residues. Residues 71-112 (ERSLGRLRGRFEDYDEELEEEEEMEEEEEEEEEMSHFSLRLE) are a coiled coil. Acidic residues predominate over residues 83–103 (DYDEELEEEEEMEEEEEEEEE). A Phosphoserine modification is found at S118. The RING-type zinc finger occupies 137 to 176 (CSICKGYLIDATTITECLHTFCKSCIVRHFYYSNRCPKCN). Residues K226 and K237 each participate in a glycyl lysine isopeptide (Lys-Gly) (interchain with G-Cter in SUMO2) cross-link.

As to quaternary structure, component of a PRC1-like complex. Interacts with BMI1/PCGF4, RING1 and RNF2. Interacts with KDM5D. Interacts with CBX4, CBX6, CBX7 and CBX8. In terms of processing, phosphorylated during mitosis. Expressed in ovary, testis, stomach, liver, thymus and kidney (at protein level).

It localises to the nucleus. Functionally, transcriptional repressor. May modulate the levels of histone H3K4Me3 by activating KDM5D histone demethylase. Component of a Polycomb group (PcG) multiprotein PRC1-like complex, a complex class required to maintain the transcriptionally repressive state of many genes, including Hox genes, throughout development. PcG PRC1 complex acts via chromatin remodeling and modification of histones; it mediates monoubiquitination of histone H2A 'Lys-119', rendering chromatin heritably changed in its expressibility. Within the PRC1-like complex, regulates RNF2 ubiquitin ligase activity. This is Polycomb group RING finger protein 6 (Pcgf6) from Mus musculus (Mouse).